A 353-amino-acid chain; its full sequence is Protein disulfide isomerase CRELD2 (353 aa).

The N-terminal stretch at 1–24 (MRLPRRAALGLLPLLLLLPPAPEA) is a signal peptide. The CXXC signature appears at 31 to 34 (CHRC). Disulfide bonds link C31/C34, C140/C154, C148/C166, and C168/C177. An EGF-like 1 domain is found at 136–178 (DCLACQGGSQRPCSGNGHCSGDGSRQGDGSCRCHMGYQGPLCT). The FU 1 repeat unit spans residues 193-240 (HSICTACDESCKTCSGLTNRDCGECEVGWVLDEGACVDVDECAAEPPP). The N-linked (GlcNAc...) asparagine glycan is linked to N251. One copy of the FU 2 repeat lies at 253–302 (SYTCEECDSSCVGCTGEGPGNCKECISGYAREHGQCADVDECSLAEKTCV). Residues 263–266 (CVGC) carry the CXXC motif. 4 cysteine pairs are disulfide-bonded: C263–C266, C294–C308, C301–C317, and C319–C330. The EGF-like 2; calcium-binding domain occupies 290-331 (DVDECSLAEKTCVRKNENCYNTPGSYVCVCPDGFEETEDACV). Positions 332–353 (PPAEAEATEGESPTQLPSREDL) are disordered. A compositionally biased stretch (polar residues) spans 342–353 (ESPTQLPSREDL).

This sequence belongs to the CRELD family. As to quaternary structure, interacts with CHRNA4. Component of a complex containing at least CRELD2, MANF, MATN3 and PDIA4. In terms of tissue distribution, ubiquitously expressed. Highly expressed in skeletal muscle, heart, liver, kidney and placenta.

The protein localises to the endoplasmic reticulum. It catalyses the reaction Catalyzes the rearrangement of -S-S- bonds in proteins.. Protein disulfide isomerase. Might play a role in the unfolded protein response. May regulate transport of alpha4-beta2 neuronal acetylcholine receptor. The sequence is that of Protein disulfide isomerase CRELD2 (CRELD2) from Homo sapiens (Human).